The primary structure comprises 148 residues: D-aminoacyl-tRNA deacylase (148 aa).

The Gly-cisPro motif, important for rejection of L-amino acids motif lies at 137–138; sequence GP.

It belongs to the DTD family. As to quaternary structure, homodimer.

Its subcellular location is the cytoplasm. It carries out the reaction glycyl-tRNA(Ala) + H2O = tRNA(Ala) + glycine + H(+). The catalysed reaction is a D-aminoacyl-tRNA + H2O = a tRNA + a D-alpha-amino acid + H(+). Its function is as follows. An aminoacyl-tRNA editing enzyme that deacylates mischarged D-aminoacyl-tRNAs. Also deacylates mischarged glycyl-tRNA(Ala), protecting cells against glycine mischarging by AlaRS. Acts via tRNA-based rather than protein-based catalysis; rejects L-amino acids rather than detecting D-amino acids in the active site. By recycling D-aminoacyl-tRNA to D-amino acids and free tRNA molecules, this enzyme counteracts the toxicity associated with the formation of D-aminoacyl-tRNA entities in vivo and helps enforce protein L-homochirality. The sequence is that of D-aminoacyl-tRNA deacylase from Lacticaseibacillus casei (strain BL23) (Lactobacillus casei).